The following is a 274-amino-acid chain: MSLQEEIIAQLGVKPIIDPEEEIRKSVDFLKAYLKKHPFLKSYVLGISGGQDSTLAGRLAQLAVEEMRAETGDNSYRFIAVRLPYGVQVDEDDAQKALAFIQADVSLTVNIKESADAMTKAVEATGAKVSDFNKGNIKARSRMIAQYALAGSYSGAVIGTDHAAENVTAFFTKFGDGGADILPLYRLNKRQGKQLLAALGADPALYEKVPTADLEEEKPGIADEVALGVTYNEIDDYLEGKSVSAQAQETIESWWHKGQHKRHFPITVFDEFWR.

46–53 (GISGGQDS) is an ATP binding site. Residue aspartate 52 coordinates Mg(2+). Arginine 140 serves as a coordination point for deamido-NAD(+). Threonine 160 is an ATP binding site. Glutamate 165 lines the Mg(2+) pocket. Lysine 173 and aspartate 180 together coordinate deamido-NAD(+). Residues lysine 189 and threonine 211 each contribute to the ATP site. 260–261 (HK) provides a ligand contact to deamido-NAD(+).

Belongs to the NAD synthetase family. As to quaternary structure, homodimer.

The enzyme catalyses deamido-NAD(+) + NH4(+) + ATP = AMP + diphosphate + NAD(+) + H(+). It functions in the pathway cofactor biosynthesis; NAD(+) biosynthesis; NAD(+) from deamido-NAD(+) (ammonia route): step 1/1. Its function is as follows. Catalyzes the ATP-dependent amidation of deamido-NAD to form NAD. Uses ammonia as a nitrogen source. The protein is NH(3)-dependent NAD(+) synthetase of Streptococcus sanguinis (strain SK36).